A 209-amino-acid polypeptide reads, in one-letter code: Large ribosomal subunit protein uL4 (209 aa).

Residues 50-89 (MTKTKGLVSGGGKKPFKQKGTGGARQGSSRSILMPGGGTA) form a disordered region.

The protein belongs to the universal ribosomal protein uL4 family. Part of the 50S ribosomal subunit.

Functionally, one of the primary rRNA binding proteins, this protein initially binds near the 5'-end of the 23S rRNA. It is important during the early stages of 50S assembly. It makes multiple contacts with different domains of the 23S rRNA in the assembled 50S subunit and ribosome. Its function is as follows. Forms part of the polypeptide exit tunnel. This Bdellovibrio bacteriovorus (strain ATCC 15356 / DSM 50701 / NCIMB 9529 / HD100) protein is Large ribosomal subunit protein uL4.